Consider the following 141-residue polypeptide: Nucleoside diphosphate kinase (141 aa).

Lys11, Phe59, Arg87, Thr93, Arg104, and Asn114 together coordinate ATP. The Pros-phosphohistidine intermediate role is filled by His117.

Belongs to the NDK family. In terms of assembly, homotetramer. Mg(2+) serves as cofactor.

The protein resides in the cytoplasm. It catalyses the reaction a 2'-deoxyribonucleoside 5'-diphosphate + ATP = a 2'-deoxyribonucleoside 5'-triphosphate + ADP. The catalysed reaction is a ribonucleoside 5'-diphosphate + ATP = a ribonucleoside 5'-triphosphate + ADP. Major role in the synthesis of nucleoside triphosphates other than ATP. The ATP gamma phosphate is transferred to the NDP beta phosphate via a ping-pong mechanism, using a phosphorylated active-site intermediate. This is Nucleoside diphosphate kinase from Verminephrobacter eiseniae (strain EF01-2).